Here is a 262-residue protein sequence, read N- to C-terminus: Indole-3-glycerol phosphate synthase (262 aa).

It belongs to the TrpC family.

The catalysed reaction is 1-(2-carboxyphenylamino)-1-deoxy-D-ribulose 5-phosphate + H(+) = (1S,2R)-1-C-(indol-3-yl)glycerol 3-phosphate + CO2 + H2O. It participates in amino-acid biosynthesis; L-tryptophan biosynthesis; L-tryptophan from chorismate: step 4/5. This Staphylococcus epidermidis (strain ATCC 35984 / DSM 28319 / BCRC 17069 / CCUG 31568 / BM 3577 / RP62A) protein is Indole-3-glycerol phosphate synthase.